The chain runs to 541 residues: Chaperonin GroEL (541 aa).

ATP-binding positions include Thr29–Pro32, Asp86–Thr90, Gly413, Asn478–Leu480, and Asp494.

Belongs to the chaperonin (HSP60) family. In terms of assembly, forms a cylinder of 14 subunits composed of two heptameric rings stacked back-to-back. Interacts with the co-chaperonin GroES.

Its subcellular location is the cytoplasm. The catalysed reaction is ATP + H2O + a folded polypeptide = ADP + phosphate + an unfolded polypeptide.. Functionally, together with its co-chaperonin GroES, plays an essential role in assisting protein folding. The GroEL-GroES system forms a nano-cage that allows encapsulation of the non-native substrate proteins and provides a physical environment optimized to promote and accelerate protein folding. The chain is Chaperonin GroEL from Lachnoclostridium phytofermentans (strain ATCC 700394 / DSM 18823 / ISDg) (Clostridium phytofermentans).